We begin with the raw amino-acid sequence, 137 residues long: Small ribosomal subunit protein uS12 (137 aa).

A disordered region spans residues 1–57; that stretch reads MPTINQLVRKPRRAQVTKSKSPAMNVGYNSRKKVQTKLASPQKRGVATRVGTMTPKK. Asp-102 carries the 3-methylthioaspartic acid modification.

The protein belongs to the universal ribosomal protein uS12 family. As to quaternary structure, part of the 30S ribosomal subunit. Contacts proteins S8 and S17. May interact with IF1 in the 30S initiation complex.

With S4 and S5 plays an important role in translational accuracy. Functionally, interacts with and stabilizes bases of the 16S rRNA that are involved in tRNA selection in the A site and with the mRNA backbone. Located at the interface of the 30S and 50S subunits, it traverses the body of the 30S subunit contacting proteins on the other side and probably holding the rRNA structure together. The combined cluster of proteins S8, S12 and S17 appears to hold together the shoulder and platform of the 30S subunit. The sequence is that of Small ribosomal subunit protein uS12 from Lactococcus lactis subsp. lactis (strain IL1403) (Streptococcus lactis).